Here is a 491-residue protein sequence, read N- to C-terminus: Probable glycine dehydrogenase (decarboxylating) subunit 2 (491 aa).

Position 273 is an N6-(pyridoxal phosphate)lysine (lysine 273).

This sequence belongs to the GcvP family. C-terminal subunit subfamily. The glycine cleavage system is composed of four proteins: P, T, L and H. In this organism, the P 'protein' is a heterodimer of two subunits. The cofactor is pyridoxal 5'-phosphate.

It carries out the reaction N(6)-[(R)-lipoyl]-L-lysyl-[glycine-cleavage complex H protein] + glycine + H(+) = N(6)-[(R)-S(8)-aminomethyldihydrolipoyl]-L-lysyl-[glycine-cleavage complex H protein] + CO2. The glycine cleavage system catalyzes the degradation of glycine. The P protein binds the alpha-amino group of glycine through its pyridoxal phosphate cofactor; CO(2) is released and the remaining methylamine moiety is then transferred to the lipoamide cofactor of the H protein. This chain is Probable glycine dehydrogenase (decarboxylating) subunit 2, found in Bacillus thuringiensis (strain Al Hakam).